We begin with the raw amino-acid sequence, 488 residues long: Zinc finger protein 92 (488 aa).

Residues 14 to 85 (VSFEDVSVYF…DDGMESAARS (72 aa)) form the KRAB domain. 6 consecutive C2H2-type zinc fingers follow at residues 141 to 163 (YLCQ…RIIH), 169 to 191 (YECS…QRIH), 197 to 219 (YECG…QVIH), 225 to 247 (FVCR…TRIH), 253 to 275 (FECT…QRIH), and 281 to 303 (YICK…QLIH). Residues 309-331 (FTCHEYGKAFRGLSGLSQHQRVH) form a C2H2-type 7; degenerate zinc finger. A C2H2-type 8 zinc finger spans residues 337 to 359 (YECSECGRAFGRRANLFKHQVVH). Positions 387-408 (QQPQEAGEGSSAEPQPIDTNEK) are disordered. Residues 410–432 (QVCERCGQVFENKLLLCRHLRIH) form a C2H2-type 9 zinc finger. The interval 435–488 (EDDKKQKPVISSTSVLEDKSLLSQHLEAQPTEESDSEGSVVFVYAEKPHGPSSP) is disordered.

This sequence belongs to the krueppel C2H2-type zinc-finger protein family. Highly expressed in pancreatic islets.

Its subcellular location is the nucleus. In terms of biological role, KRAB domain-containing zinc-finger protein that represses B1/Alu SINE transposable elements and modulates the transcription of nearby genes in a tissue-specific manner. It regulates glucose homeostasis and lipid metabolism by modulating the expression of the endocrine cell-defining transcription factor, MAFB, in pancreatic islets and, the fat metabolism regulator, ACACB, in adipose tissue and muscle. The chain is Zinc finger protein 92 (Zfp92) from Mus musculus (Mouse).